A 334-amino-acid polypeptide reads, in one-letter code: Pre-mRNA leakage protein 39 (334 aa).

Interacts with MLP1 and MLP2.

The protein resides in the nucleus membrane. Its function is as follows. Involved in the nuclear retention of improperly spliced pre-mRNAs. The chain is Pre-mRNA leakage protein 39 (PML39) from Saccharomyces cerevisiae (strain ATCC 204508 / S288c) (Baker's yeast).